Here is a 337-residue protein sequence, read N- to C-terminus: UDP-3-O-acylglucosamine N-acyltransferase (337 aa).

His238 functions as the Proton acceptor in the catalytic mechanism.

Belongs to the transferase hexapeptide repeat family. LpxD subfamily. In terms of assembly, homotrimer.

It carries out the reaction a UDP-3-O-[(3R)-3-hydroxyacyl]-alpha-D-glucosamine + a (3R)-hydroxyacyl-[ACP] = a UDP-2-N,3-O-bis[(3R)-3-hydroxyacyl]-alpha-D-glucosamine + holo-[ACP] + H(+). It functions in the pathway bacterial outer membrane biogenesis; LPS lipid A biosynthesis. Catalyzes the N-acylation of UDP-3-O-acylglucosamine using 3-hydroxyacyl-ACP as the acyl donor. Is involved in the biosynthesis of lipid A, a phosphorylated glycolipid that anchors the lipopolysaccharide to the outer membrane of the cell. This Xanthomonas campestris pv. campestris (strain 8004) protein is UDP-3-O-acylglucosamine N-acyltransferase.